The sequence spans 789 residues: ATP-dependent 6-phosphofructokinase (789 aa).

Positions 1–404 are N-terminal catalytic PFK domain 1; the sequence is MSLKRNIRRL…NLETYKLLTK (404 aa). ATP-binding positions include glycine 41, 104-105, and 134-137; these read RC and GDGS. Aspartate 135 serves as a coordination point for Mg(2+). Residues 180 to 182, arginine 217, 224 to 226, glutamate 280, arginine 307, and 313 to 316 each bind substrate; these read SID, MGR, and HVQR. Aspartate 182 functions as the Proton acceptor in the catalytic mechanism. The interdomain linker stretch occupies residues 405 to 419; that stretch reads LRTVEKDNLSGGQNF. Positions 420–789 are C-terminal regulatory PFK domain 2; that stretch reads NVAVMNVGAP…EAMEDTEDYD (370 aa). Beta-D-fructose 2,6-bisphosphate is bound by residues lysine 489, 547-551, arginine 585, 592-594, glutamate 647, arginine 673, 679-682, and arginine 753; these read TISNN, MGG, and HAQQ.

It belongs to the phosphofructokinase type A (PFKA) family. ATP-dependent PFK group I subfamily. Eukaryotic two domain clade 'E' sub-subfamily. As to quaternary structure, homotetramer. The cofactor is Mg(2+).

The protein resides in the cytoplasm. The enzyme catalyses beta-D-fructose 6-phosphate + ATP = beta-D-fructose 1,6-bisphosphate + ADP + H(+). It functions in the pathway carbohydrate degradation; glycolysis; D-glyceraldehyde 3-phosphate and glycerone phosphate from D-glucose: step 3/4. Allosterically activated by ADP, AMP, or fructose 2,6-bisphosphate, and allosterically inhibited by ATP or citrate. Functionally, catalyzes the phosphorylation of D-fructose 6-phosphate to fructose 1,6-bisphosphate by ATP, the first committing step of glycolysis. The polypeptide is ATP-dependent 6-phosphofructokinase (PFK) (Haemonchus contortus (Barber pole worm)).